We begin with the raw amino-acid sequence, 332 residues long: MAAATAAAALAAADPPPAMPQAAGAGGPTTRRDFYWLRSFLAGGIAGCCAKTTVAPLDRVKVLLQAHNHHYKHLGVFSALRAVPQKEGFLGLYKGNGAMMIRIFPYGAIQFMAFEHYKTLITTKLGISGHVHRLMAGSMAGMTAVICTYPLDMVRVRLAFQVKGEHSYTGIIHAFKTIYAKEGGFFGFYRGLMPTILGMAPYAGVSFFTFGTLKSVGLSHAPTLLGRPSSDNPNVLVLKTHVNLLCGGVAGAIAQTISYPFDVTRRRMQLGTVLPEFEKCLTMRDTMKYVYGHHGIRKGLYRGLSLNYIRCIPSQAVAFTTYELMKQFFHLN.

3 Solcar repeats span residues 34–120 (FYWL…YKTL), 128–216 (SGHV…LKSV), and 238–328 (LKTH…MKQF). The next 6 membrane-spanning stretches (helical) occupy residues 37–57 (LRSFLAGGIAGCCAKTTVAPL), 88–108 (GFLGLYKGNGAMMIRIFPYGA), 134–154 (LMAGSMAGMTAVICTYPLDMV), 191–211 (GLMPTILGMAPYAGVSFFTFG), 244–264 (LLCGGVAGAIAQTISYPFDVT), and 299–319 (GLYRGLSLNYIRCIPSQAVAF).

The protein belongs to the mitochondrial carrier (TC 2.A.29) family.

The protein localises to the mitochondrion inner membrane. May be involved in the transport of coenzyme A in the mitochondrial matrix. Very little is known about the physiological function of this carrier. The protein is Solute carrier family 25 member 16 of Homo sapiens (Human).